A 316-amino-acid polypeptide reads, in one-letter code: MST50-interacting protein 11 (316 aa).

WD repeat units lie at residues 13–53 (GHNG…TSYG), 61–100 (GHSH…TTRR), 103–142 (GHTN…KYTI), 146–187 (GHSE…LQTD), 190–229 (GHTG…HLYS), 231–269 (NAND…KVDE), and 281–316 (SREP…MSRA).

It belongs to the WD repeat G protein beta family. Ribosomal protein RACK1 subfamily. In terms of assembly, interacts with MST50 and MCK1.

Involved in regulating the cell wall integrity and MPS1 activation via its interaction with the MAPKKK MCK1. The chain is MST50-interacting protein 11 from Pyricularia oryzae (strain 70-15 / ATCC MYA-4617 / FGSC 8958) (Rice blast fungus).